Here is a 739-residue protein sequence, read N- to C-terminus: Phosphoribosylformylglycinamidine synthase subunit PurL (739 aa).

His53 is a catalytic residue. Residues Tyr56 and Lys95 each coordinate ATP. Glu97 contacts Mg(2+). Substrate contacts are provided by residues 98–101 (SHNH) and Arg120. Residue His99 is the Proton acceptor of the active site. Asp121 lines the Mg(2+) pocket. Substrate is bound at residue Gln244. Position 274 (Asp274) interacts with Mg(2+). Substrate is bound at residue 318–320 (ESQ). Residues Asp501 and Gly538 each contribute to the ATP site. Asn539 provides a ligand contact to Mg(2+). Ser541 provides a ligand contact to substrate.

This sequence belongs to the FGAMS family. In terms of assembly, monomer. Part of the FGAM synthase complex composed of 1 PurL, 1 PurQ and 2 PurS subunits.

It localises to the cytoplasm. The enzyme catalyses N(2)-formyl-N(1)-(5-phospho-beta-D-ribosyl)glycinamide + L-glutamine + ATP + H2O = 2-formamido-N(1)-(5-O-phospho-beta-D-ribosyl)acetamidine + L-glutamate + ADP + phosphate + H(+). The protein operates within purine metabolism; IMP biosynthesis via de novo pathway; 5-amino-1-(5-phospho-D-ribosyl)imidazole from N(2)-formyl-N(1)-(5-phospho-D-ribosyl)glycinamide: step 1/2. Part of the phosphoribosylformylglycinamidine synthase complex involved in the purines biosynthetic pathway. Catalyzes the ATP-dependent conversion of formylglycinamide ribonucleotide (FGAR) and glutamine to yield formylglycinamidine ribonucleotide (FGAM) and glutamate. The FGAM synthase complex is composed of three subunits. PurQ produces an ammonia molecule by converting glutamine to glutamate. PurL transfers the ammonia molecule to FGAR to form FGAM in an ATP-dependent manner. PurS interacts with PurQ and PurL and is thought to assist in the transfer of the ammonia molecule from PurQ to PurL. The chain is Phosphoribosylformylglycinamidine synthase subunit PurL from Listeria monocytogenes serovar 1/2a (strain ATCC BAA-679 / EGD-e).